Reading from the N-terminus, the 394-residue chain is Keratin, type I cuticular Ha4 (394 aa).

A head region spans residues M1–E56. One can recognise an IF rod domain in the interval E56 to L367. A coil 1A region spans residues K57–R91. Positions S92 to S102 are linker 1. Positions Y103 to S203 are coil 1B. The interval Q204 to V219 is linker 12. The tract at residues D220 to E363 is coil 2. The tail stretch occupies residues D364–N394.

It belongs to the intermediate filament family. In terms of tissue distribution, expressed in the hair follicles.

This is Keratin, type I cuticular Ha4 (KRT34) from Homo sapiens (Human).